The sequence spans 266 residues: Hemin import ATP-binding protein HmuV (266 aa).

Positions 12-248 constitute an ABC transporter domain; that stretch reads LEASHLHYHV…ETLTQWYQAD (237 aa). 44–51 contributes to the ATP binding site; that stretch reads GPNGAGKS.

Belongs to the ABC transporter superfamily. Heme (hemin) importer (TC 3.A.1.14.5) family. As to quaternary structure, the complex is composed of two ATP-binding proteins (HmuV), two transmembrane proteins (HmuU) and a solute-binding protein (HmuT).

It is found in the cell inner membrane. Its function is as follows. Part of the ABC transporter complex HmuTUV involved in hemin import. Responsible for energy coupling to the transport system. The protein is Hemin import ATP-binding protein HmuV of Yersinia pestis bv. Antiqua (strain Antiqua).